A 524-amino-acid polypeptide reads, in one-letter code: uncharacterized protein (524 aa).

Residues 1–65 form a disordered region; that stretch reads MSDPFFTRPE…IDEENEDTYE (65 aa). Residues 21-32 are compositionally biased toward basic and acidic residues; that stretch reads SKREKENQKLER. Residues 51–64 are compositionally biased toward acidic residues; the sequence is GFEDEIDEENEDTY. WD repeat units lie at residues 131 to 176, 206 to 245, 248 to 287, 290 to 329, 342 to 380, 409 to 448, and 457 to 503; these read IETA…DTEN, DHVKEITCLAISNDGRWIVTGGLDHRIVIRDSVTLEPQHC, HHRDAVMGLAMRRGTNEMFSCSADRSIKVWSLDQMSYIET, GHQDVIFGVDALARERCVSVGGRDRTSRLWKIVEESQLVF, YMEGSVDCVAMIDEDHFVTGSDNGVIALWSVQRKKPLFT, PQPRWITSLAAIPYSNLFASGSWDGNIRLWKIAEGLRSFE, and SVYG…PNSG.

The protein resides in the nucleus. This is an uncharacterized protein from Schizosaccharomyces pombe (strain 972 / ATCC 24843) (Fission yeast).